Here is a 214-residue protein sequence, read N- to C-terminus: Large ribosomal subunit protein uL3 (214 aa).

The tract at residues 131–155 is disordered; sequence GAQRTSHGNSRSHRVPGSIGMAQDP. Gln153 is subject to N5-methylglutamine.

This sequence belongs to the universal ribosomal protein uL3 family. As to quaternary structure, part of the 50S ribosomal subunit. Forms a cluster with proteins L14 and L19. Post-translationally, methylated by PrmB.

In terms of biological role, one of the primary rRNA binding proteins, it binds directly near the 3'-end of the 23S rRNA, where it nucleates assembly of the 50S subunit. The polypeptide is Large ribosomal subunit protein uL3 (Neisseria gonorrhoeae (strain ATCC 700825 / FA 1090)).